The chain runs to 39 residues: MKVRPSVKPMCEHCKVIRRKGRVMIICSANPKHKQRQGK.

This sequence belongs to the bacterial ribosomal protein bL36 family.

The polypeptide is Large ribosomal subunit protein bL36 (Lactiplantibacillus plantarum (strain ATCC BAA-793 / NCIMB 8826 / WCFS1) (Lactobacillus plantarum)).